A 213-amino-acid polypeptide reads, in one-letter code: Glycerol-3-phosphate acyltransferase (213 aa).

5 helical membrane-spanning segments follow: residues 3 to 23 (ILLA…VVVS), 51 to 71 (KAAI…VWLA), 78 to 98 (DVAV…PVFF), 115 to 135 (AVHP…AFFF), and 140 to 160 (LAAL…FGTP).

The protein belongs to the PlsY family. Probably interacts with PlsX.

The protein resides in the cell inner membrane. The catalysed reaction is an acyl phosphate + sn-glycerol 3-phosphate = a 1-acyl-sn-glycero-3-phosphate + phosphate. The protein operates within lipid metabolism; phospholipid metabolism. In terms of biological role, catalyzes the transfer of an acyl group from acyl-phosphate (acyl-PO(4)) to glycerol-3-phosphate (G3P) to form lysophosphatidic acid (LPA). This enzyme utilizes acyl-phosphate as fatty acyl donor, but not acyl-CoA or acyl-ACP. In Burkholderia cenocepacia (strain ATCC BAA-245 / DSM 16553 / LMG 16656 / NCTC 13227 / J2315 / CF5610) (Burkholderia cepacia (strain J2315)), this protein is Glycerol-3-phosphate acyltransferase.